A 268-amino-acid chain; its full sequence is Undecaprenyl-diphosphatase (268 aa).

7 helical membrane passes run 47–67, 83–103, 109–129, 144–164, 184–204, 218–238, and 246–266; these read FTVL…FAKL, FVIG…IAGK, LFNP…LMWV, FPLP…IPGV, AAEF…AYDF, TVAI…KAFL, and FTFF…ALAL.

This sequence belongs to the UppP family.

Its subcellular location is the cell inner membrane. It catalyses the reaction di-trans,octa-cis-undecaprenyl diphosphate + H2O = di-trans,octa-cis-undecaprenyl phosphate + phosphate + H(+). Functionally, catalyzes the dephosphorylation of undecaprenyl diphosphate (UPP). Confers resistance to bacitracin. This is Undecaprenyl-diphosphatase from Nitrobacter winogradskyi (strain ATCC 25391 / DSM 10237 / CIP 104748 / NCIMB 11846 / Nb-255).